Reading from the N-terminus, the 389-residue chain is Protein Wnt-10b (389 aa).

The signal sequence occupies residues 1 to 28; it reads MLEEPRPRPPPSGLAGLLFLALCSRALS. Thr46 is subject to Phosphothreonine. Disulfide bonds link Cys83/Cys94, Cys136/Cys144, Cys146/Cys199, Cys247/Cys261, Cys249/Cys256, Cys318/Cys349, Cys334/Cys344, Cys348/Cys388, Cys364/Cys379, Cys366/Cys376, and Cys371/Cys372. Asn93 is a glycosylation site (N-linked (GlcNAc...) asparagine). The segment at 171-197 is disordered; that stretch reads KSFPHSLPSPGPGSSPSPGPQDTWEWG. Pro residues predominate over residues 177–189; that stretch reads LPSPGPGSSPSPG. The O-palmitoleoyl serine; by PORCN moiety is linked to residue Ser253. N-linked (GlcNAc...) asparagine glycosylation is present at Asn335.

It belongs to the Wnt family. Forms a soluble 1:1 complex with AFM; this prevents oligomerization and is required for prolonged biological activity. The complex with AFM may represent the physiological form in body fluids. In terms of processing, palmitoleoylation is required for efficient binding to frizzled receptors. Depalmitoleoylation leads to Wnt signaling pathway inhibition. In terms of tissue distribution, detected in most adult tissues. Highest levels were found in heart and skeletal muscle. Low levels are found in brain.

Its subcellular location is the secreted. It is found in the extracellular space. The protein resides in the extracellular matrix. Functionally, member of the Wnt ligand gene family that encodes for secreted proteins, which activate the Wnt signaling cascade. Specifically activates canonical Wnt/beta-catenin signaling and thus triggers beta-catenin/LEF/TCF-mediated transcriptional programs. Involved in signaling networks controlling stemness, pluripotency and cell fate decisions. Acts in the immune system, mammary gland, adipose tissue, bone and skin. This Homo sapiens (Human) protein is Protein Wnt-10b (WNT10B).